Consider the following 195-residue polypeptide: tRNA (pseudouridine(54)-N(1))-methyltransferase (195 aa).

Residue Leu129 coordinates S-adenosyl-L-methionine.

It belongs to the methyltransferase superfamily. TrmY family. In terms of assembly, homodimer.

It is found in the cytoplasm. The catalysed reaction is pseudouridine(54) in tRNA + S-adenosyl-L-methionine = N(1)-methylpseudouridine(54) in tRNA + S-adenosyl-L-homocysteine + H(+). Specifically catalyzes the N1-methylation of pseudouridine at position 54 (Psi54) in tRNAs. The sequence is that of tRNA (pseudouridine(54)-N(1))-methyltransferase from Methanocorpusculum labreanum (strain ATCC 43576 / DSM 4855 / Z).